The sequence spans 181 residues: Calmodulin-like protein 6 (181 aa).

EF-hand domains are found at residues 33–68 (EQIK…LGIN), 69–104 (PTKS…YHEK), 107–142 (NQES…AGEP), and 143–178 (LNEV…ESFK). Ca(2+) contacts are provided by Asp-156, Asp-158, Asp-160, Thr-162, and Glu-167.

Belongs to the calmodulin family. Calglandulin subfamily. Expressed in prostate, thymus, heart, skeleton muscle, bone marrow and ovary.

The protein localises to the cytoplasm. The protein resides in the nucleus. This is Calmodulin-like protein 6 (CALML6) from Homo sapiens (Human).